The sequence spans 158 residues: 2-C-methyl-D-erythritol 2,4-cyclodiphosphate synthase (158 aa).

Residues aspartate 9 and histidine 11 each contribute to the a divalent metal cation site. 4-CDP-2-C-methyl-D-erythritol 2-phosphate contacts are provided by residues 9–11 (DVH) and 35–36 (HS). Position 43 (histidine 43) interacts with a divalent metal cation. 4-CDP-2-C-methyl-D-erythritol 2-phosphate is bound by residues 57-59 (DIG), 62-66 (FPDTD), 101-107 (AQKPKMA), 133-136 (TTTE), phenylalanine 140, and arginine 143.

Belongs to the IspF family. Homotrimer. It depends on a divalent metal cation as a cofactor.

The catalysed reaction is 4-CDP-2-C-methyl-D-erythritol 2-phosphate = 2-C-methyl-D-erythritol 2,4-cyclic diphosphate + CMP. It functions in the pathway isoprenoid biosynthesis; isopentenyl diphosphate biosynthesis via DXP pathway; isopentenyl diphosphate from 1-deoxy-D-xylulose 5-phosphate: step 4/6. Involved in the biosynthesis of isopentenyl diphosphate (IPP) and dimethylallyl diphosphate (DMAPP), two major building blocks of isoprenoid compounds. Catalyzes the conversion of 4-diphosphocytidyl-2-C-methyl-D-erythritol 2-phosphate (CDP-ME2P) to 2-C-methyl-D-erythritol 2,4-cyclodiphosphate (ME-CPP) with a corresponding release of cytidine 5-monophosphate (CMP). The polypeptide is 2-C-methyl-D-erythritol 2,4-cyclodiphosphate synthase (Bacillus cytotoxicus (strain DSM 22905 / CIP 110041 / 391-98 / NVH 391-98)).